The following is a 124-amino-acid chain: Outer dense fiber protein 2 (124 aa).

Residues K13 to L124 adopt a coiled-coil conformation.

Belongs to the ODF2 family. Self-associates. Associates with microtubules and forms a fibrillar structure partially linked to the microtubule network. Interacts through its C-terminus with PLK1. Interacts with ODF1. Interacts with MARK4; the interaction is required for localization of ODF2 to centrioles. Interacts with TSSK4. Interacts with AKNA. Interacts with QRICH2. Interacts with CFAP58. Interacts with BBOF1. Interacts with CCDC38. Interacts with CCDC42. Tyrosine phosphorylated. Detected in sperm flagella (at protein level).

Its subcellular location is the cytoplasm. It localises to the cytoskeleton. The protein resides in the microtubule organizing center. The protein localises to the centrosome. It is found in the cell projection. Its subcellular location is the cilium. It localises to the centriole. The protein resides in the spindle pole. The protein localises to the flagellum. In terms of biological role, seems to be a major component of sperm tail outer dense fibers (ODF). ODFs are filamentous structures located on the outside of the axoneme in the midpiece and principal piece of the mammalian sperm tail and may help to maintain the passive elastic structures and elastic recoil of the sperm tail. May have a modulating influence on sperm motility. Functions as a general scaffold protein that is specifically localized at the distal/subdistal appendages of mother centrioles. Component of the centrosome matrix required for the localization of PLK1 and NIN to the centrosomes. Required for the formation and/or maintenance of normal CETN1 assembly. The sequence is that of Outer dense fiber protein 2 from Mesocricetus auratus (Golden hamster).